The primary structure comprises 154 residues: Myoglobin (154 aa).

Residues 2 to 148 enclose the Globin domain; it reads VLSDAEWQLV…FRKDIAAKYK (147 aa). Ser-4 is modified (phosphoserine). His-65 is a nitrite binding site. His-65 contacts O2. At Thr-68 the chain carries Phosphothreonine. A heme b-binding site is contributed by His-94.

Belongs to the globin family. Monomeric.

The protein localises to the cytoplasm. Its subcellular location is the sarcoplasm. The enzyme catalyses Fe(III)-heme b-[protein] + nitric oxide + H2O = Fe(II)-heme b-[protein] + nitrite + 2 H(+). It catalyses the reaction H2O2 + AH2 = A + 2 H2O. Monomeric heme protein which primary function is to store oxygen and facilitate its diffusion within muscle tissues. Reversibly binds oxygen through a pentacoordinated heme iron and enables its timely and efficient release as needed during periods of heightened demand. Depending on the oxidative conditions of tissues and cells, and in addition to its ability to bind oxygen, it also has a nitrite reductase activity whereby it regulates the production of bioactive nitric oxide. Under stress conditions, like hypoxia and anoxia, it also protects cells against reactive oxygen species thanks to its pseudoperoxidase activity. This is Myoglobin (MB) from Megaptera novaeangliae (Humpback whale).